The chain runs to 310 residues: Homoserine kinase (310 aa).

Residue 91 to 101 (PIGSGLGSSAC) coordinates ATP.

This sequence belongs to the GHMP kinase family. Homoserine kinase subfamily.

Its subcellular location is the cytoplasm. The catalysed reaction is L-homoserine + ATP = O-phospho-L-homoserine + ADP + H(+). Its pathway is amino-acid biosynthesis; L-threonine biosynthesis; L-threonine from L-aspartate: step 4/5. Functionally, catalyzes the ATP-dependent phosphorylation of L-homoserine to L-homoserine phosphate. The polypeptide is Homoserine kinase (Escherichia coli O139:H28 (strain E24377A / ETEC)).